A 466-amino-acid polypeptide reads, in one-letter code: Chromosomal replication initiator protein DnaA (466 aa).

Residues 1 to 86 (MSLSLWQQCL…EVGTKPVTQT (86 aa)) form a domain I, interacts with DnaA modulators region. The interval 86 to 129 (TLKTPVHNVVAPTQTTTAQPQRVAPAARSGWDNVPAPAEPTYRS) is domain II. Positions 130 to 346 (NVNVKHTFDN…GALNRVIANA (217 aa)) are domain III, AAA+ region. Residues G174, G176, K177, and T178 each contribute to the ATP site. The tract at residues 347–466 (NFTGRAITID…FSNLIRTLSS (120 aa)) is domain IV, binds dsDNA.

Belongs to the DnaA family. As to quaternary structure, oligomerizes as a right-handed, spiral filament on DNA at oriC.

It localises to the cytoplasm. Plays an essential role in the initiation and regulation of chromosomal replication. ATP-DnaA binds to the origin of replication (oriC) to initiate formation of the DNA replication initiation complex once per cell cycle. Binds the DnaA box (a 9 base pair repeat at the origin) and separates the double-stranded (ds)DNA. Forms a right-handed helical filament on oriC DNA; dsDNA binds to the exterior of the filament while single-stranded (ss)DNA is stabiized in the filament's interior. The ATP-DnaA-oriC complex binds and stabilizes one strand of the AT-rich DNA unwinding element (DUE), permitting loading of DNA polymerase. After initiation quickly degrades to an ADP-DnaA complex that is not apt for DNA replication. Binds acidic phospholipids. This is Chromosomal replication initiator protein DnaA from Salmonella enteritidis PT4 (strain P125109).